A 320-amino-acid chain; its full sequence is MQNRNTFLGVKEQITRSIFVSIMIYVITRASISNAYPIFAQQGYENPREATGRIVCANCHLASKPVDIEVPQAVLPDTVFEAVVRIPYDMQLKQVLANGKKGALNVGAVLILPEGFELAPPDRISPEVKEKMGNLSFQNYRPNKKNIIVIGPAPGQKYSEIVFPILSPDPATKKDVHFLKYPIYVGGNRGRGQIYPDGSKSNNTVYNATSAGIVSKIVRKEKGGYEITIIDASDGHQVVDIIPRGPELLVSEGESIKLDQPLTSNPNVGGFGQGDAEIVLQDPLRIQGLLFFLASVILAQIFLVLKKKQFEKVQLYEMNF.

Positions 1-35 are cleaved as a signal peptide; the sequence is MQNRNTFLGVKEQITRSIFVSIMIYVITRASISNA. Positions 36, 56, 59, and 60 each coordinate heme. Residues 286–306 traverse the membrane as a helical segment; the sequence is IQGLLFFLASVILAQIFLVLK.

Belongs to the cytochrome f family. The 4 large subunits of the cytochrome b6-f complex are cytochrome b6, subunit IV (17 kDa polypeptide, petD), cytochrome f and the Rieske protein, while the 4 small subunits are PetG, PetL, PetM and PetN. The complex functions as a dimer. Heme is required as a cofactor.

It localises to the plastid. Its subcellular location is the chloroplast thylakoid membrane. Its function is as follows. Component of the cytochrome b6-f complex, which mediates electron transfer between photosystem II (PSII) and photosystem I (PSI), cyclic electron flow around PSI, and state transitions. The chain is Cytochrome f from Dioscorea elephantipes (Elephant's foot yam).